The following is a 409-amino-acid chain: Bone morphogenetic protein 4 (409 aa).

The first 19 residues, 1–19 (MIPGNRMLMVVLLCQVLLG), serve as a signal peptide directing secretion. The propeptide occupies 20 to 293 (GASHASLIPE…ALTRRRRAKR (274 aa)). A Phosphoserine modification is found at Ser91. Residues 91-110 (SGEEEEEEQMPSGGLEYPER) form a disordered region. N-linked (GlcNAc...) asparagine glycans are attached at residues Asn144, Asn209, Asn351, and Asn366. 3 cysteine pairs are disulfide-bonded: Cys309-Cys374, Cys338-Cys406, and Cys342-Cys408.

This sequence belongs to the TGF-beta family. As to quaternary structure, homodimer; disulfide-linked. Interacts with GREM2. Part of a complex consisting of TWSG1 and CHRD. Interacts with the serine proteases, HTRA1 and HTRA3; the interaction with either inhibits BMP4-mediated signaling. The HTRA protease activity is required for this inhibition. Interacts with SOSTDC1. Interacts with FBN1 (via N-terminal domain) and FBN2. Interacts with type I receptor BMPR1A. Interacts with type II receptor BMPR2. Interacts with FSTL1; this interaction inhibits the activation of the BMP4/Smad1/5/8 signaling pathway. Interacts with SCUBE3. Interacts with TGFBR3.

It is found in the secreted. The protein resides in the extracellular space. The protein localises to the extracellular matrix. Functionally, growth factor of the TGF-beta superfamily that plays essential roles in many developmental processes, including neurogenesis, vascular development, angiogenesis and osteogenesis. Acts in concert with PTHLH/PTHRP to stimulate ductal outgrowth during embryonic mammary development and to inhibit hair follicle induction. Initiates the canonical BMP signaling cascade by associating with type I receptor BMPR1A and type II receptor BMPR2. Once all three components are bound together in a complex at the cell surface, BMPR2 phosphorylates and activates BMPR1A. In turn, BMPR1A propagates signal by phosphorylating SMAD1/5/8 that travel to the nucleus and act as activators and repressors of transcription of target genes. Positively regulates the expression of odontogenic development regulator MSX1 via inducing the IPO7-mediated import of SMAD1 to the nucleus. Required for MSX1-mediated mesenchymal molar tooth bud development beyond the bud stage, via promoting Wnt signaling. Acts as a positive regulator of odontoblast differentiation during mesenchymal tooth germ formation, expression is repressed during the bell stage by MSX1-mediated inhibition of CTNNB1 signaling. Able to induce its own expression in dental mesenchymal cells and also in the neighboring dental epithelial cells via an MSX1-mediated pathway. Can also signal through non-canonical BMP pathways such as ERK/MAP kinase, PI3K/Akt, or SRC cascades. For example, induces SRC phosphorylation which, in turn, activates VEGFR2, leading to an angiogenic response. The sequence is that of Bone morphogenetic protein 4 (BMP4) from Oryctolagus cuniculus (Rabbit).